The sequence spans 368 residues: MFYWLIELTNTFPSLAMFRGLLNVFRYITFRTGGAVVTGALFVFLFGPWIIDHLRLRQGKGQPIRADGPQSHIISKKGTPTMGGLMILSGLVVSTVLWANPLNPYVWIVLAVTLGFGFVGFYDDYLKVTKQSHSGFAGRARILIEAGIALVACYALVRLGRDPSSTGLAIPFFKDLVIKFGWMYVIFGAFVIVGAGNAVNLTDGLDGLAIVPVMIASASFGLIAYLAGNAVFSDYLQIHYVAGTGELAVLCGAVLGAGLGFLWFNAPPASIFMGDTGSLALGGMLGSIAVAVKHEIVLAVIGGLFVLEAVSVIVQVASFKLTGKRIFKMAPIHHHFEQLGWTEPQIVIRFWIISVMLALVGLSTLKLR.

10 helical membrane passes run 34 to 54 (GAVVTGALFVFLFGPWIIDHL), 79 to 99 (TPTMGGLMILSGLVVSTVLWA), 102 to 122 (LNPYVWIVLAVTLGFGFVGFY), 140 to 160 (ARILIEAGIALVACYALVRLG), 176 to 196 (LVIKFGWMYVIFGAFVIVGAG), 207 to 227 (GLAIVPVMIASASFGLIAYLA), 247 to 267 (LAVLCGAVLGAGLGFLWFNAP), 271 to 291 (IFMGDTGSLALGGMLGSIAVA), 296 to 316 (IVLAVIGGLFVLEAVSVIVQV), and 345 to 365 (QIVIRFWIISVMLALVGLSTL).

Belongs to the glycosyltransferase 4 family. MraY subfamily. Mg(2+) serves as cofactor.

It localises to the cell inner membrane. It catalyses the reaction UDP-N-acetyl-alpha-D-muramoyl-L-alanyl-gamma-D-glutamyl-meso-2,6-diaminopimeloyl-D-alanyl-D-alanine + di-trans,octa-cis-undecaprenyl phosphate = di-trans,octa-cis-undecaprenyl diphospho-N-acetyl-alpha-D-muramoyl-L-alanyl-D-glutamyl-meso-2,6-diaminopimeloyl-D-alanyl-D-alanine + UMP. Its pathway is cell wall biogenesis; peptidoglycan biosynthesis. Functionally, catalyzes the initial step of the lipid cycle reactions in the biosynthesis of the cell wall peptidoglycan: transfers peptidoglycan precursor phospho-MurNAc-pentapeptide from UDP-MurNAc-pentapeptide onto the lipid carrier undecaprenyl phosphate, yielding undecaprenyl-pyrophosphoryl-MurNAc-pentapeptide, known as lipid I. This Bradyrhizobium sp. (strain BTAi1 / ATCC BAA-1182) protein is Phospho-N-acetylmuramoyl-pentapeptide-transferase.